A 583-amino-acid polypeptide reads, in one-letter code: R-linalool synthase QH5, chloroplastic (583 aa).

A chloroplast-targeting transit peptide spans 1–40 (MASISLFPYSILKQTSPLARGTAYNRIYSTKTTGITVDVA). (2E)-geranyl diphosphate-binding residues include Arg298, Asp335, Asp339, Arg476, and Asp479. Asp335 and Asp339 together coordinate Mg(2+). The DDXXD motif motif lies at 335–339 (DDVYD). Residues Asp479, Thr483, and Glu487 each coordinate Mg(2+). Residue Asp492 coordinates K(+).

Belongs to the terpene synthase family. Tpsb subfamily. Requires Mg(2+) as cofactor. The cofactor is Mn(2+). It depends on K(+) as a cofactor. As to expression, expressed in every aerial organ except for the stem stele of mature plants. Not detected in roots.

It localises to the plastid. The protein localises to the chloroplast. It carries out the reaction (2E)-geranyl diphosphate + H2O = (R)-linalool + diphosphate. The protein operates within secondary metabolite biosynthesis; terpenoid biosynthesis. Its function is as follows. Monoterpene synthase that catalyzes the formation of (3R)-linalool from geranyl diphosphate, but not from isopentenyl diphosphate, dimethylallyl diphosphate, chrysanthemyl diphosphate, farnesyl diphosphate, (+)-copalyl diphosphate or geranylgeranyl diphosphate. The protein is R-linalool synthase QH5, chloroplastic of Artemisia annua (Sweet wormwood).